The chain runs to 222 residues: Ras-related protein Rab-21 (222 aa).

Residue Ala2 is modified to N-acetylalanine. Residues Gly26, Gly29, Lys30, Thr31, Ser32, Asn43, Asp44, His46, Thr48, and Thr49 each contribute to the GTP site. Thr31 serves as a coordination point for Mg(2+). The short motif at 41–54 (KFNDKHITTLQASF) is the Switch 1 element. Positions 49 and 72 each coordinate Mg(2+). Residues 74 to 92 (AGQERFHALGPIYYRDSNG) carry the Switch 2 motif. Residues Gly75, Asn130, Lys131, Asp133, Ala161, and Lys162 each coordinate GTP. S-geranylgeranyl cysteine attachment occurs at residues Cys218 and Cys219. Cys219 bears the Cysteine methyl ester mark. Residues 220-222 (SSG) constitute a propeptide, removed in mature form.

It belongs to the small GTPase superfamily. Rab family. As to quaternary structure, interacts with the cytoplasmic tail of integrins ITGA1, ITGA2, ITGA5, ITGA6, ITGA11 and ITGB1; this interaction is dependent upon its GDP/GTP cycle. Interacts with RABGEF1 (via VPS9 domain). Interacts with ANKRD27. Interacts with VAMP7. Interacts (in GTP-bound form) with VAMP8 in response to starvation; the interaction probably regulates VAMP8 endolysosomal trafficking. Interacts (active GTP-bound form) with TMED10; the interaction is indirect and regulates TMED10 abundance and localization at the Golgi. The cofactor is Mg(2+).

The protein resides in the endoplasmic reticulum membrane. Its subcellular location is the golgi apparatus. It is found in the trans-Golgi network. It localises to the golgi apparatus membrane. The protein localises to the early endosome membrane. The protein resides in the cytoplasmic vesicle membrane. Its subcellular location is the cleavage furrow. It is found in the cell projection. It localises to the neuron projection. It carries out the reaction GTP + H2O = GDP + phosphate + H(+). Regulated by guanine nucleotide exchange factors (GEFs) including ANKRD27 and RABGEF1, which promote the exchange of bound GDP for free GTP. Regulated by GTPase activating proteins (GAPs) which increase the GTP hydrolysis activity. Inhibited by GDP dissociation inhibitors (GDIs). The small GTPases Rab are key regulators of intracellular membrane trafficking, from the formation of transport vesicles to their fusion with membranes. Rabs cycle between an inactive GDP-bound form and an active GTP-bound form that is able to recruit to membranes different sets of downstream effectors directly responsible for vesicle formation, movement, tethering and fusion. RAB21 is involved in membrane trafficking control. Regulates integrin internalization and recycling, but does not influence the traffic of endosomally translocated receptors in general. As a result, may regulate cell adhesion and migration. During the mitosis of adherent cells, controls the endosomal trafficking of integrins which is required for the successful completion of cytokinesis. Involved in neurite growth. Following SBF2/MTMT13-mediated activation in response to starvation-induced autophagy, binds to and regulates SNARE protein VAMP8 endolysosomal transport required for SNARE-mediated autophagosome-lysosome fusion. Modulates protein levels of the cargo receptors TMED2 and TMED10, and required for appropriate Golgi localization of TMED10. This Mus musculus (Mouse) protein is Ras-related protein Rab-21.